Here is a 496-residue protein sequence, read N- to C-terminus: Gasdermin-E (496 aa).

The membrane targeting domain stretch occupies residues Met-1 to Leu-56. Cys-45 carries the post-translational modification S-(2-succinyl)cysteine. A Glycyl lysine isopeptide (Lys-Gly) (interchain with G-Cter in ubiquitin) cross-link involves residue Lys-120. Residues Cys-156, Cys-168, and Cys-180 each carry the S-(2-succinyl)cysteine modification. A Glycyl lysine isopeptide (Lys-Gly) (interchain with G-Cter in ubiquitin) cross-link involves residue Lys-189. Residues Cys-235, Cys-371, Cys-408, Cys-417, and Cys-489 each carry the S-(2-succinyl)cysteine modification.

It belongs to the gasdermin family. In terms of assembly, homooligomer; homooligomeric ring-shaped pore complex containing 27-28 subunits when inserted in the membrane. Cleavage at Asp-270 by CASP3 (mature and uncleaved precursor forms) or granzyme B (GZMB) relieves autoinhibition and is sufficient to initiate pyroptosis. In terms of processing, succination by the Krebs cycle intermediate fumarate, which leads to S-(2-succinyl)cysteine residues, inhibits processing by caspases, and ability to initiate pyroptosis. Succination modification is catalyzed by a non-enzymatic reaction caused by an accumulation of fumarate. Post-translationally, ubiquitinated at Lys-120 and Lys-189 via 'Lys-48'-linked polyubiquitin chains, leading to proteasomal degradation. Deubiquitinated by USP48, leading to increased stability. Palmitoylated. Expressed in cochlea. Low level of expression in heart, brain, placenta, lung, liver, skeletal muscle, kidney and pancreas, with highest expression in placenta.

It is found in the cell membrane. It localises to the cytoplasm. The protein localises to the cytosol. Its activity is regulated as follows. The full-length protein before cleavage is inactive: intramolecular interactions between N- and C-terminal domains mediate autoinhibition in the absence of activation signal. The intrinsic pyroptosis-inducing activity is carried by the released N-terminal moiety (Gasdermin-E, N-terminal) following cleavage by CASP3 or granzyme B (GZMB). Activated by NLRP1 in the absence of GSDMD expression: NLRP1 cleaves and activates CASP8, promoting downstream activation of CASP3 and subsequent activation of GSDME. With respect to regulation, (Microbial infection) Activated upon human coronavirus SARS-CoV-2 infection, leading to lung epithelial cell death. Activation takes place in response to (1) activation of NLRP1 and (2) inactivation of GSDMD following NLRP1 and GSDMD cleavage by the SARS-CoV-2 3C-like proteinase nsp5. Precursor of a pore-forming protein that converts non-inflammatory apoptosis to pyroptosis. This form constitutes the precursor of the pore-forming protein: upon cleavage, the released N-terminal moiety (Gasdermin-E, N-terminal) binds to membranes and forms pores, triggering pyroptosis. Functionally, pore-forming protein produced by cleavage by CASP3 or granzyme B (GZMB), which converts non-inflammatory apoptosis to pyroptosis or promotes granzyme-mediated pyroptosis, respectively. After cleavage, moves to the plasma membrane, homooligomerizes within the membrane and forms pores of 10-15 nanometers (nm) of inner diameter, allowing the release of mature interleukins (IL1B and IL16) and triggering pyroptosis. Binds to inner leaflet lipids, bisphosphorylated phosphatidylinositols, such as phosphatidylinositol (4,5)-bisphosphate. Cleavage by CASP3 switches CASP3-mediated apoptosis induced by TNF or danger signals, such as chemotherapy drugs, to pyroptosis. Mediates secondary necrosis downstream of the mitochondrial apoptotic pathway and CASP3 activation as well as in response to viral agents. Exhibits bactericidal activity. Cleavage by GZMB promotes tumor suppressor activity by triggering robust anti-tumor immunity. Suppresses tumors by mediating granzyme-mediated pyroptosis in target cells of natural killer (NK) cells: cleavage by granzyme B (GZMB), delivered to target cells from NK-cells, triggers pyroptosis of tumor cells and tumor suppression. May play a role in the p53/TP53-regulated cellular response to DNA damage. In terms of biological role, (Microbial infection) Pore-forming protein, which promotes maternal placental pyroptosis in response to Zika virus infection, contributing to adverse fetal outcomes. In Homo sapiens (Human), this protein is Gasdermin-E.